The following is a 443-amino-acid chain: Probable D-serine dehydratase (443 aa).

Lys-118 carries the post-translational modification N6-(pyridoxal phosphate)lysine.

It belongs to the serine/threonine dehydratase family. DsdA subfamily. The cofactor is pyridoxal 5'-phosphate.

The catalysed reaction is D-serine = pyruvate + NH4(+). The chain is Probable D-serine dehydratase from Aeromonas salmonicida (strain A449).